The following is a 61-amino-acid chain: Small ribosomal subunit protein uS14 (61 aa).

Residues cysteine 24, cysteine 27, cysteine 40, and cysteine 43 each coordinate Zn(2+).

Belongs to the universal ribosomal protein uS14 family. Zinc-binding uS14 subfamily. In terms of assembly, part of the 30S ribosomal subunit. Contacts proteins S3 and S10. It depends on Zn(2+) as a cofactor.

In terms of biological role, binds 16S rRNA, required for the assembly of 30S particles and may also be responsible for determining the conformation of the 16S rRNA at the A site. This chain is Small ribosomal subunit protein uS14, found in Desulforamulus reducens (strain ATCC BAA-1160 / DSM 100696 / MI-1) (Desulfotomaculum reducens).